A 419-amino-acid polypeptide reads, in one-letter code: MKVAVIGSGGREHTLAWSLVRSPEVSHCYCLPGNGGTAGLPKTENVAIAVDQLGEICEFCQTEKINLVVVGPELPLTLGLTDQLQALGIKVFGPTKAGAELEASKSWTKQLLIEAGVPTAFGETFTEPAPAQAYATKMGAPIVVKADGLAAGKGVIVAQTSAEATTAIAELFDQGFEKIVVEEFLPGEEVSVLALCDGKTVIPLLPAQDHKRIGEGDQGLNTGGMGAYCPAPIAPPAVIDQVQKQILQPTANALAKRGIDYRGVLYAGLMVSPTGEIKVLEYNCRFGDPETQAVLPLLATPLEKVLMACVEQNLEQLGPLQWHSGNAVCVVVAAGGYPGSYRKGDEINGLAEAEAQDVKVFHAGTELKEGKVLTNGGRVLGVTALGKDLSTAIATAYRGVEQIDFDGMYYRRDIGHKAL.

The 203-residue stretch at 109 to 311 (KQLLIEAGVP…LEKVLMACVE (203 aa)) folds into the ATP-grasp domain. Residue 135 to 191 (ATKMGAPIVVKADGLAAGKGVIVAQTSAEATTAIAELFDQGFEKIVVEEFLPGEEVS) coordinates ATP. Residues glutamate 281 and asparagine 283 each contribute to the Mg(2+) site.

The protein belongs to the GARS family. Mg(2+) is required as a cofactor. Mn(2+) serves as cofactor.

It catalyses the reaction 5-phospho-beta-D-ribosylamine + glycine + ATP = N(1)-(5-phospho-beta-D-ribosyl)glycinamide + ADP + phosphate + H(+). It functions in the pathway purine metabolism; IMP biosynthesis via de novo pathway; N(1)-(5-phospho-D-ribosyl)glycinamide from 5-phospho-alpha-D-ribose 1-diphosphate: step 2/2. In Synechocystis sp. (strain ATCC 27184 / PCC 6803 / Kazusa), this protein is Phosphoribosylamine--glycine ligase.